Reading from the N-terminus, the 354-residue chain is Tryptophan--tRNA ligase (354 aa).

ATP contacts are provided by residues 13–15 (QPT) and 21–22 (GN). The short motif at 14–22 (PTGNLHLGN) is the 'HIGH' region element. L-tryptophan is bound at residue Asp137. Residues 149–151 (GDD), Val208, and 217–221 (KMSKS) contribute to the ATP site. Residues 217-221 (KMSKS) carry the 'KMSKS' region motif.

The protein belongs to the class-I aminoacyl-tRNA synthetase family. Homodimer.

Its subcellular location is the cytoplasm. It catalyses the reaction tRNA(Trp) + L-tryptophan + ATP = L-tryptophyl-tRNA(Trp) + AMP + diphosphate + H(+). Functionally, catalyzes the attachment of tryptophan to tRNA(Trp). In Rhizobium meliloti (strain 1021) (Ensifer meliloti), this protein is Tryptophan--tRNA ligase.